The sequence spans 349 residues: 2-oxoglutarate-Fe(II) type oxidoreductase hxnY (349 aa).

Residues 178-282 (GVATMRMLHY…RYSIPFFFSG (105 aa)) enclose the Fe2OG dioxygenase domain. The Fe cation site is built by His205, Asp207, and His263. Arg273 is a 2-oxoglutarate binding site.

The protein belongs to the iron/ascorbate-dependent oxidoreductase family. The cofactor is Fe(2+).

2-oxoglutarate-Fe(II) type oxidoreductase, part of the hnx cluster involved in the purine degradation. The nicotinate hydroxylase hnxS accepts nicotinate as a substrate and catalyzes the first step of nicotinate catabolism. The major facilitator-type transporters hxnP and hxnZ are probably involved in the uptake of nicotinate-derived metabolites, and the oxidoreductases hxnT and hxnY in the further metabolism of 6-OH nicotinic acid. The sequence is that of 2-oxoglutarate-Fe(II) type oxidoreductase hxnY from Emericella nidulans (strain FGSC A4 / ATCC 38163 / CBS 112.46 / NRRL 194 / M139) (Aspergillus nidulans).